The primary structure comprises 323 residues: Quinolinate synthase (323 aa).

The iminosuccinate site is built by His-37 and Ser-54. Position 99 (Cys-99) interacts with [4Fe-4S] cluster. Residues 125–127 and Ser-142 each bind iminosuccinate; that span reads YIN. Cys-185 provides a ligand contact to [4Fe-4S] cluster. Iminosuccinate-binding positions include 211–213 and Thr-228; that span reads HPE. Residue Cys-278 participates in [4Fe-4S] cluster binding.

The protein belongs to the quinolinate synthase family. Type 2 subfamily. Requires [4Fe-4S] cluster as cofactor.

It localises to the cytoplasm. The enzyme catalyses iminosuccinate + dihydroxyacetone phosphate = quinolinate + phosphate + 2 H2O + H(+). It participates in cofactor biosynthesis; NAD(+) biosynthesis; quinolinate from iminoaspartate: step 1/1. In terms of biological role, catalyzes the condensation of iminoaspartate with dihydroxyacetone phosphate to form quinolinate. The chain is Quinolinate synthase from Trichodesmium erythraeum (strain IMS101).